We begin with the raw amino-acid sequence, 49 residues long: Heme exporter protein C (49 aa).

It belongs to the CcmC/CycZ/HelC family.

Its subcellular location is the cell inner membrane. In terms of biological role, required for the export of heme to the periplasm for the biogenesis of c-type cytochromes. This chain is Heme exporter protein C, found in Rhizobium leguminosarum bv. viciae.